Reading from the N-terminus, the 224-residue chain is Redox-sensing transcriptional repressor Rex (224 aa).

Residues 17–56 constitute a DNA-binding region (H-T-H motif); it reads RYHRYLEELLKNDVKRISSRELSEKMGVTASQIRQDLNNF. 91 to 96 provides a ligand contact to NAD(+); the sequence is GAGNLG.

This sequence belongs to the transcriptional regulatory Rex family. As to quaternary structure, homodimer.

The protein resides in the cytoplasm. In terms of biological role, modulates transcription in response to changes in cellular NADH/NAD(+) redox state. This Thermoanaerobacter pseudethanolicus (strain ATCC 33223 / 39E) (Clostridium thermohydrosulfuricum) protein is Redox-sensing transcriptional repressor Rex.